The following is a 100-amino-acid chain: NADH-quinone oxidoreductase subunit K 1 (100 aa).

3 helical membrane passes run 3-23 (IIKAYIILSIALFLIGLLGVI), 28-48 (LITVLVSTELMLNGINLALVA), and 60-80 (IFAFFVLTVAAAEVAVGLGLI).

The protein belongs to the complex I subunit 4L family. NDH-1 is composed of 14 different subunits. Subunits NuoA, H, J, K, L, M, N constitute the membrane sector of the complex.

It is found in the cell inner membrane. The enzyme catalyses a quinone + NADH + 5 H(+)(in) = a quinol + NAD(+) + 4 H(+)(out). In terms of biological role, NDH-1 shuttles electrons from NADH, via FMN and iron-sulfur (Fe-S) centers, to quinones in the respiratory chain. The immediate electron acceptor for the enzyme in this species is believed to be ubiquinone. Couples the redox reaction to proton translocation (for every two electrons transferred, four hydrogen ions are translocated across the cytoplasmic membrane), and thus conserves the redox energy in a proton gradient. The polypeptide is NADH-quinone oxidoreductase subunit K 1 (Aquifex aeolicus (strain VF5)).